We begin with the raw amino-acid sequence, 548 residues long: Rop guanine nucleotide exchange factor 1 (548 aa).

Over residues methionine 1–valine 12 the composition is skewed to acidic residues. The disordered stretch occupies residues methionine 1 to histidine 38. Low complexity predominate over residues serine 19 to serine 36. Residues aspartate 81–threonine 462 enclose the PRONE domain. Residues serine 458–aspartate 548 are involved in auto-inhibition. Phosphoserine occurs at positions 460 and 480.

As to quaternary structure, interacts with ARAC10/ROP11 and FER. Forms a complex with ARAC11/ROP1 and PRK2. Interacts in vitro (via PRONE domain) with PRK1, PRK2, PRK3 and PRK4. The C-terminal region is also important for the interaction with PRK2. Phosphorylated at Ser-460 and Ser-480 by PRK2. As to expression, expressed in roots, cotyledons, leaves, stems, sepals, petals, anthers, pollen grains, stigmas and siliques.

It localises to the cytoplasm. Its subcellular location is the cytosol. The protein localises to the cell membrane. Its activity is regulated as follows. Phosphorylation at Ser-460 and Ser-480 by PRK2 releases ROPGEF1 auto-inhibition, thereby activating ROPGEF1, which in turn activates ARAC11/ROP1. In terms of biological role, guanine-nucleotide exchange factor (GEF) that acts as an activator of Rop (Rho of plants) GTPases by promoting the exchange of GDP for GTP. Acts downstream of PRK2 in the control of polarized pollen tube growth by activating ARAC11/ROP1. In association with ROPGEF4, acts as a specific regulator of ARAC10/ROP11 function in ABA-mediated stomatal closure. May play a role in the Rac/Rop-signaling pathway that controls ROS-mediated root hair development. The sequence is that of Rop guanine nucleotide exchange factor 1 (ROPGEF1) from Arabidopsis thaliana (Mouse-ear cress).